Reading from the N-terminus, the 498-residue chain is Ammonium transporter 1 member 3 (498 aa).

11 consecutive transmembrane segments (helical) span residues 41–61 (LLFS…LCAG), 76–96 (VLDA…FAFG), 122–142 (FFLF…GSIA), 150–170 (YLIY…HWFW), 194–214 (FAGS…GAFI), 238–258 (LVVL…PGSF), 277–299 (AVGR…TLYG), 307–327 (WNVT…TAGC), 329–349 (VVDP…LIGC), 362–382 (LEAT…TALF), and 414–434 (IVQI…LFYV). Residues 473 to 498 (RAKSAAETARVEPRKSPEQAAAGQFV) are disordered.

Belongs to the ammonia transporter channel (TC 1.A.11.2) family. As to expression, expressed in roots.

It localises to the membrane. Functionally, ammonium transporter probably involved in ammonium uptake from the soil. In Oryza sativa subsp. japonica (Rice), this protein is Ammonium transporter 1 member 3 (AMT1-3).